The sequence spans 388 residues: Succinate--CoA ligase [ADP-forming] subunit beta (388 aa).

One can recognise an ATP-grasp domain in the interval 9-244 (KQLFARYGLP…QSQEDPREAQ (236 aa)). ATP is bound by residues K46, 53 to 55 (GRG), E99, T102, and E107. Mg(2+) contacts are provided by N199 and D213. Substrate is bound by residues N264 and 321–323 (GIV).

It belongs to the succinate/malate CoA ligase beta subunit family. In terms of assembly, heterotetramer of two alpha and two beta subunits. Mg(2+) serves as cofactor.

The enzyme catalyses succinate + ATP + CoA = succinyl-CoA + ADP + phosphate. It catalyses the reaction GTP + succinate + CoA = succinyl-CoA + GDP + phosphate. Its pathway is carbohydrate metabolism; tricarboxylic acid cycle; succinate from succinyl-CoA (ligase route): step 1/1. Functionally, succinyl-CoA synthetase functions in the citric acid cycle (TCA), coupling the hydrolysis of succinyl-CoA to the synthesis of either ATP or GTP and thus represents the only step of substrate-level phosphorylation in the TCA. The beta subunit provides nucleotide specificity of the enzyme and binds the substrate succinate, while the binding sites for coenzyme A and phosphate are found in the alpha subunit. The protein is Succinate--CoA ligase [ADP-forming] subunit beta of Shigella boydii serotype 18 (strain CDC 3083-94 / BS512).